A 147-amino-acid polypeptide reads, in one-letter code: MAKFLLLNGPNLNLLGTREPQIYGSQTLAQICDTLREQAKAHGHVLEDFQSNAEHELVERVHRASREGIDFILINPGAFTHTSIALRDALLGVAIPFIEVHLSNVHAREPFRHKSYLSDVARGVIMGLGPKGYALALDAAIHLTQKN.

The active-site Proton acceptor is Tyr-23. Substrate is bound by residues Asn-75, His-81, and Asp-88. His-101 (proton donor) is an active-site residue. Substrate contacts are provided by residues 102–103 and Arg-112; that span reads LS.

Belongs to the type-II 3-dehydroquinase family. Homododecamer.

It carries out the reaction 3-dehydroquinate = 3-dehydroshikimate + H2O. Its pathway is metabolic intermediate biosynthesis; chorismate biosynthesis; chorismate from D-erythrose 4-phosphate and phosphoenolpyruvate: step 3/7. Catalyzes a trans-dehydration via an enolate intermediate. The polypeptide is 3-dehydroquinate dehydratase (Thioalkalivibrio sulfidiphilus (strain HL-EbGR7)).